A 257-amino-acid chain; its full sequence is Dihydroorotate dehydrogenase B (NAD(+)), electron transfer subunit (257 aa).

The FAD-binding FR-type domain occupies 2–102 (IGRERMTVVS…LGPLGHGFPL (101 aa)). FAD-binding positions include 53 to 56 (RPLS), 70 to 72 (IYR), and 77 to 78 (GT). The [2Fe-2S] cluster site is built by cysteine 221, cysteine 226, cysteine 229, and cysteine 244.

This sequence belongs to the PyrK family. In terms of assembly, heterotetramer of 2 PyrK and 2 PyrD type B subunits. [2Fe-2S] cluster is required as a cofactor. The cofactor is FAD.

It functions in the pathway pyrimidine metabolism; UMP biosynthesis via de novo pathway; orotate from (S)-dihydroorotate (NAD(+) route): step 1/1. Its function is as follows. Responsible for channeling the electrons from the oxidation of dihydroorotate from the FMN redox center in the PyrD type B subunit to the ultimate electron acceptor NAD(+). This is Dihydroorotate dehydrogenase B (NAD(+)), electron transfer subunit from Geobacillus thermodenitrificans (strain NG80-2).